The sequence spans 355 residues: S-adenosylmethionine:tRNA ribosyltransferase-isomerase (355 aa).

This sequence belongs to the QueA family. As to quaternary structure, monomer.

It localises to the cytoplasm. The catalysed reaction is 7-aminomethyl-7-carbaguanosine(34) in tRNA + S-adenosyl-L-methionine = epoxyqueuosine(34) in tRNA + adenine + L-methionine + 2 H(+). Its pathway is tRNA modification; tRNA-queuosine biosynthesis. Functionally, transfers and isomerizes the ribose moiety from AdoMet to the 7-aminomethyl group of 7-deazaguanine (preQ1-tRNA) to give epoxyqueuosine (oQ-tRNA). The protein is S-adenosylmethionine:tRNA ribosyltransferase-isomerase of Gluconacetobacter diazotrophicus (strain ATCC 49037 / DSM 5601 / CCUG 37298 / CIP 103539 / LMG 7603 / PAl5).